A 472-amino-acid polypeptide reads, in one-letter code: 3-isopropylmalate dehydratase large subunit (472 aa).

3 residues coordinate [4Fe-4S] cluster: Cys-347, Cys-407, and Cys-410.

This sequence belongs to the aconitase/IPM isomerase family. LeuC type 1 subfamily. In terms of assembly, heterodimer of LeuC and LeuD. [4Fe-4S] cluster serves as cofactor.

It carries out the reaction (2R,3S)-3-isopropylmalate = (2S)-2-isopropylmalate. It functions in the pathway amino-acid biosynthesis; L-leucine biosynthesis; L-leucine from 3-methyl-2-oxobutanoate: step 2/4. Its function is as follows. Catalyzes the isomerization between 2-isopropylmalate and 3-isopropylmalate, via the formation of 2-isopropylmaleate. This chain is 3-isopropylmalate dehydratase large subunit, found in Synechococcus sp. (strain CC9902).